A 127-amino-acid chain; its full sequence is DNA-directed RNA polymerase subunit omega (127 aa).

It belongs to the RNA polymerase subunit omega family. As to quaternary structure, the RNAP catalytic core consists of 2 alpha, 1 beta, 1 beta' and 1 omega subunit. When a sigma factor is associated with the core the holoenzyme is formed, which can initiate transcription.

The catalysed reaction is RNA(n) + a ribonucleoside 5'-triphosphate = RNA(n+1) + diphosphate. Functionally, promotes RNA polymerase assembly. Latches the N- and C-terminal regions of the beta' subunit thereby facilitating its interaction with the beta and alpha subunits. This is DNA-directed RNA polymerase subunit omega (rpoZ) from Rickettsia prowazekii (strain Madrid E).